A 149-amino-acid polypeptide reads, in one-letter code: Transcriptional repressor NrdR (149 aa).

Residues 3-34 fold into a zinc finger; sequence CPFCATDDTKVVDSRLTADGYQIRRRRECPVC. In terms of domain architecture, ATP-cone spans 49–139; that stretch reads PHIVKNNGSR…VYLSFDDVEE (91 aa).

This sequence belongs to the NrdR family. It depends on Zn(2+) as a cofactor.

In terms of biological role, negatively regulates transcription of bacterial ribonucleotide reductase nrd genes and operons by binding to NrdR-boxes. The sequence is that of Transcriptional repressor NrdR from Glaesserella parasuis serovar 5 (strain SH0165) (Haemophilus parasuis).